We begin with the raw amino-acid sequence, 481 residues long: Alpha-L-arabinofuranosidase 43 (481 aa).

The signal sequence occupies residues 1-19 (MRFSVFTAAIAAAFSACCA). 3 N-linked (GlcNAc...) asparagine glycosylation sites follow: Asn158, Asn176, and Asn365.

It belongs to the glycosyl hydrolase 43 family.

It is found in the secreted. It catalyses the reaction Hydrolysis of terminal non-reducing alpha-L-arabinofuranoside residues in alpha-L-arabinosides.. Its activity is regulated as follows. Activity is significantly inhibited by SDS and partially inhibited by Ag(+), Fe(3+) and beta-mercaptoethanol. Functionally, alpha-L-arabinofuranosidase specific for the cleavage of alpha-1,3-linkage. Shows high activity against 4-nitrophenyl alpha-L-arabinofuranoside, debranched arabinan, and sugar beet arabinan. This Humicola insolens (Soft-rot fungus) protein is Alpha-L-arabinofuranosidase 43.